The primary structure comprises 470 residues: Cysteine--tRNA ligase (470 aa).

Cysteine 27 is a Zn(2+) binding site. Positions 29–39 (PTVYNFFHIGN) match the 'HIGH' region motif. The Zn(2+) site is built by cysteine 211, histidine 236, and glutamate 240. The 'KMSKS' region motif lies at 268-272 (KMSKS). Lysine 271 is a binding site for ATP.

The protein belongs to the class-I aminoacyl-tRNA synthetase family. Monomer. Requires Zn(2+) as cofactor.

It localises to the cytoplasm. It catalyses the reaction tRNA(Cys) + L-cysteine + ATP = L-cysteinyl-tRNA(Cys) + AMP + diphosphate. The chain is Cysteine--tRNA ligase from Clostridium botulinum (strain Eklund 17B / Type B).